The following is a 143-amino-acid chain: Large ribosomal subunit protein uL11 (143 aa).

It belongs to the universal ribosomal protein uL11 family. In terms of assembly, part of the ribosomal stalk of the 50S ribosomal subunit. Interacts with L10 and the large rRNA to form the base of the stalk. L10 forms an elongated spine to which L12 dimers bind in a sequential fashion forming a multimeric L10(L12)X complex. Post-translationally, one or more lysine residues are methylated.

Functionally, forms part of the ribosomal stalk which helps the ribosome interact with GTP-bound translation factors. This is Large ribosomal subunit protein uL11 from Pseudomonas fluorescens (strain SBW25).